The primary structure comprises 248 residues: Probable transcriptional regulatory protein Fphi_1565 (248 aa).

Belongs to the TACO1 family.

The protein localises to the cytoplasm. The chain is Probable transcriptional regulatory protein Fphi_1565 from Francisella philomiragia subsp. philomiragia (strain ATCC 25017 / CCUG 19701 / FSC 153 / O#319-036).